The following is a 153-amino-acid chain: Bacteriohemerythrin (153 aa).

Residues H21, H57, E61, H76, H80, H115, and D120 each contribute to the Fe cation site.

Belongs to the hemerythrin family. Monomer.

Functionally, oxygen-binding protein. May be involved in a storage mechanism or for delivery to oxygen-requiring enzymes. The oxygen-binding site contains two iron atoms. This is Bacteriohemerythrin from Pseudomonas aeruginosa (strain UCBPP-PA14).